The primary structure comprises 108 residues: uncharacterized protein (108 aa).

3 disulfide bridges follow: cysteine 44/cysteine 82, cysteine 60/cysteine 78, and cysteine 63/cysteine 91.

This sequence belongs to the arthropod CHH/MIH/GIH/VIH hormone family.

This is an uncharacterized protein from Caenorhabditis elegans.